The following is a 329-amino-acid chain: Sex comb on midleg-like protein 1 (329 aa).

Phosphoserine occurs at positions 138 and 238. Residues 138 to 157 (SPTLPVSRRENNSPSNLPRP) form a disordered region. Residues 258–325 (WSVEAVVLFL…YYIDRLKQGK (68 aa)) form the SAM domain.

It belongs to the SCM family.

The protein localises to the nucleus. Functionally, putative Polycomb group (PcG) protein. PcG proteins act by forming multiprotein complexes, which are required to maintain the transcriptionally repressive state of homeotic genes throughout development. May be involved in spermatogenesis during sexual maturation. This Gorilla gorilla gorilla (Western lowland gorilla) protein is Sex comb on midleg-like protein 1 (SCML1).